We begin with the raw amino-acid sequence, 642 residues long: Tigger transposable element derived 5 (642 aa).

Positions 1–54 are disordered; the sequence is MYPASPSAGPALHPVPHRARLPRPRCLAEPPRSPAPGPGSTARPPPPAPGPRPR. Residues 31-52 show a composition bias toward pro residues; it reads PRSPAPGPGSTARPPPPAPGPR. Residues 56 to 107 form the HTH psq-type domain; sequence AVKMTFRKAYSIKDKLQAIERVKGGERQASVCRDFGVPGGTLRGWLKDEPKL. 2 consecutive DNA-binding regions (H-T-H motif) follow at residues 83–103 and 154–187; these read QASVCRDFGVPGGTLRGWLKD and PVIQAQAEAFARQIYGPECTFKASHGWFWRWQKR. The region spanning 121–194 is the HTH CENPB-type domain; it reads QRKKMRLANE…QKRHGISSQR (74 aa). Over residues 198–208 the composition is skewed to low complexity; the sequence is EAEPPVAGPAP. The tract at residues 198-230 is disordered; the sequence is EAEPPVAGPAPVKEEPAQPSSAGLLLDGTPATL. The region spanning 239–364 is the DDE-1 domain; that stretch reads DEQIYNANVT…CLQQKAVLLV (126 aa). Residues 543–583 are disordered; sequence GLPEGCGEEVAPAAPPSPASLPSSIGAGEEEEEEATEQGGV.

It belongs to the tigger transposable element derived protein family.

It localises to the nucleus. The sequence is that of Tigger transposable element derived 5 (Tigd5) from Rattus norvegicus (Rat).